We begin with the raw amino-acid sequence, 194 residues long: Protein GrpE (194 aa).

Polar residues predominate over residues 1-14 (MENTQENPTSQNPT). Residues 1–50 (MENTQENPTSQNPTPADETARQAAEAAAPQQEAAANAATDSPVNAEQSAL) are disordered. Residues 21–38 (RQAAEAAAPQQEAAANAA) show a composition bias toward low complexity.

It belongs to the GrpE family. Homodimer.

The protein localises to the cytoplasm. In terms of biological role, participates actively in the response to hyperosmotic and heat shock by preventing the aggregation of stress-denatured proteins, in association with DnaK and GrpE. It is the nucleotide exchange factor for DnaK and may function as a thermosensor. Unfolded proteins bind initially to DnaJ; upon interaction with the DnaJ-bound protein, DnaK hydrolyzes its bound ATP, resulting in the formation of a stable complex. GrpE releases ADP from DnaK; ATP binding to DnaK triggers the release of the substrate protein, thus completing the reaction cycle. Several rounds of ATP-dependent interactions between DnaJ, DnaK and GrpE are required for fully efficient folding. The chain is Protein GrpE from Paraburkholderia phytofirmans (strain DSM 17436 / LMG 22146 / PsJN) (Burkholderia phytofirmans).